We begin with the raw amino-acid sequence, 343 residues long: Uroporphyrinogen decarboxylase (343 aa).

Residues 23–27, D73, Y150, S205, and H322 each bind substrate; that span reads RQAGR.

The protein belongs to the uroporphyrinogen decarboxylase family. Homodimer.

Its subcellular location is the cytoplasm. The enzyme catalyses uroporphyrinogen III + 4 H(+) = coproporphyrinogen III + 4 CO2. Its pathway is porphyrin-containing compound metabolism; protoporphyrin-IX biosynthesis; coproporphyrinogen-III from 5-aminolevulinate: step 4/4. In terms of biological role, catalyzes the decarboxylation of four acetate groups of uroporphyrinogen-III to yield coproporphyrinogen-III. This chain is Uroporphyrinogen decarboxylase, found in Cereibacter sphaeroides (strain ATCC 17025 / ATH 2.4.3) (Rhodobacter sphaeroides).